We begin with the raw amino-acid sequence, 587 residues long: Dynein axonemal intermediate chain 2 (587 aa).

4 WD repeats span residues 214–254 (RPAS…NPVE), 261–302 (SHRD…EPTE), 362–401 (GHHG…SSIM), and 405–445 (YHTS…NNPS). Disordered regions lie at residues 519 to 542 (LKER…DMKE) and 562 to 587 (KEQQ…IVHE).

Belongs to the dynein intermediate chain family. In terms of assembly, consists of at least two heavy chains and a number of intermediate and light chains. Interacts with DNAAF2. Interacts with DNAAF6/PIH1D3. Interacts with HEATR2; probably involved in outer arm dynein assembly. Interacts with C16ORF71/DAAP1.

It localises to the cytoplasm. The protein localises to the cytoskeleton. The protein resides in the cilium axoneme. Its subcellular location is the dynein axonemal particle. Its function is as follows. Part of the dynein complex of multiciliated cell cilia. The protein is Dynein axonemal intermediate chain 2 (dnai2) of Xenopus laevis (African clawed frog).